The chain runs to 198 residues: Ribonuclease HII (198 aa).

The 192-residue stretch at 3–194 (RRVCGVDEAG…VKRCLALGQQ (192 aa)) folds into the RNase H type-2 domain. Residues Asp9, Glu10, and Asp101 each contribute to the a divalent metal cation site.

Belongs to the RNase HII family. It depends on Mn(2+) as a cofactor. Mg(2+) serves as cofactor.

It localises to the cytoplasm. It carries out the reaction Endonucleolytic cleavage to 5'-phosphomonoester.. Endonuclease that specifically degrades the RNA of RNA-DNA hybrids. The chain is Ribonuclease HII from Laribacter hongkongensis (strain HLHK9).